The sequence spans 312 residues: Olfactory receptor 6B2 (312 aa).

The Extracellular portion of the chain corresponds to methionine 1–tyrosine 25. The N-linked (GlcNAc...) asparagine glycan is linked to asparagine 5. The chain crosses the membrane as a helical span at residues leucine 26 to isoleucine 46. Residues leucine 47 to serine 54 lie on the Cytoplasmic side of the membrane. The chain crosses the membrane as a helical span at residues leucine 55–serine 75. At aspartate 76–threonine 99 the chain is on the extracellular side. Cysteine 97 and cysteine 189 form a disulfide bridge. Residues glutamine 100–tyrosine 120 traverse the membrane as a helical segment. Topologically, residues aspartate 121–glycine 139 are cytoplasmic. Residues leucine 140–valine 160 traverse the membrane as a helical segment. Residues cysteine 161–glutamate 196 lie on the Extracellular side of the membrane. The chain crosses the membrane as a helical span at residues leucine 197–serine 217. Over tyrosine 218–alanine 237 the chain is Cytoplasmic. The helical transmembrane segment at phenylalanine 238–methionine 258 threads the bilayer. Over tyrosine 259–asparagine 271 the chain is Extracellular. Residues lysine 272 to leucine 292 form a helical membrane-spanning segment. The Cytoplasmic segment spans residues arginine 293–histidine 312.

It belongs to the G-protein coupled receptor 1 family.

It localises to the cell membrane. In terms of biological role, odorant receptor. The polypeptide is Olfactory receptor 6B2 (OR6B2) (Homo sapiens (Human)).